Here is a 1165-residue protein sequence, read N- to C-terminus: DNA-directed RNA polymerase subunit beta (1165 aa).

It belongs to the RNA polymerase beta chain family. As to quaternary structure, the RNAP catalytic core consists of 2 alpha, 1 beta, 1 beta' and 1 omega subunit. When a sigma factor is associated with the core the holoenzyme is formed, which can initiate transcription.

The catalysed reaction is RNA(n) + a ribonucleoside 5'-triphosphate = RNA(n+1) + diphosphate. Functionally, DNA-dependent RNA polymerase catalyzes the transcription of DNA into RNA using the four ribonucleoside triphosphates as substrates. The protein is DNA-directed RNA polymerase subunit beta of Corynebacterium glutamicum (strain R).